We begin with the raw amino-acid sequence, 134 residues long: uncharacterized protein (134 aa).

It belongs to the orthopoxviruses B21 protein family.

This is an uncharacterized protein from Bos taurus (Bovine).